Here is a 154-residue protein sequence, read N- to C-terminus: Prefoldin subunit alpha (154 aa).

A compositionally biased stretch (polar residues) spans 92-102; that stretch reads DNAVESLSTKQ. Positions 92 to 154 are disordered; the sequence is DNAVESLSTK…MQDQQPEDNE (63 aa). Residues 103–114 show a composition bias toward basic and acidic residues; that stretch reads DALDNRIESLRD. A compositionally biased stretch (low complexity) spans 128 to 148; that stretch reads QQAQQMQQQMQQQQMQQMQDQ.

Belongs to the prefoldin subunit alpha family. Heterohexamer of two alpha and four beta subunits.

The protein localises to the cytoplasm. Molecular chaperone capable of stabilizing a range of proteins. Seems to fulfill an ATP-independent, HSP70-like function in archaeal de novo protein folding. The polypeptide is Prefoldin subunit alpha (Haloquadratum walsbyi (strain DSM 16790 / HBSQ001)).